Here is a 166-residue protein sequence, read N- to C-terminus: Myosin regulatory light chain 2, ventricular/cardiac muscle isoform (166 aa).

A N,N,N-trimethylserine modification is found at Ser2. A phosphoserine mark is found at Ser14, Ser15, and Ser19. 3 EF-hand domains span residues 24–59 (TQIQEFKEAFTIMDQNRDGFIDKNDLRDTFAALGRV), 94–129 (DPEETILNAFKVFDPEGKGSLKADYVREMLTTQAER), and 130–165 (FSKEEIDQMFAAFPPDVTGNLDYKNLVHIITHGEEK). The Ca(2+) site is built by Asp37, Asn39, Asp41, and Asp48. Position 52 is a phosphothreonine (Thr52).

In terms of assembly, myosin is a hexamer of 2 heavy chains and 4 light chains. Interacts with MYOC. In terms of processing, N-terminus is methylated by METTL11A/NTM1. Post-translationally, phosphorylated by MYLK3 and MYLK2; promotes cardiac muscle contraction and function. Dephosphorylated by PPP1CB complexed to PPP1R12B. The phosphorylated form in adult is expressed as gradients across the heart from endocardium (low phosphorylation) to epicardium (high phosphorylation); regulates cardiac torsion and workload distribution. Abundantly expressed in both cardiac and slow skeletal muscle (soleus), with no detectable expression in fast skeletal muscle (vastus lateralis) or non-muscle tissue.

The protein localises to the cytoplasm. It is found in the myofibril. The protein resides in the sarcomere. Its subcellular location is the a band. Functionally, contractile protein that plays a role in heart development and function. Following phosphorylation, plays a role in cross-bridge cycling kinetics and cardiac muscle contraction by increasing myosin lever arm stiffness and promoting myosin head diffusion; as a consequence of the increase in maximum contraction force and calcium sensitivity of contraction force. These events altogether slow down myosin kinetics and prolong duty cycle resulting in accumulated myosins being cooperatively recruited to actin binding sites to sustain thin filament activation as a means to fine-tune myofilament calcium sensitivity to force. During cardiogenesis plays an early role in cardiac contractility by promoting cardiac myofibril assembly. This is Myosin regulatory light chain 2, ventricular/cardiac muscle isoform from Rattus norvegicus (Rat).